Here is a 730-residue protein sequence, read N- to C-terminus: Nitrogen fixation protein FixI (730 aa).

Topologically, residues 1 to 101 are cytoplasmic; sequence MHVTRDFSHY…AEVAEVAESR (101 aa). The region spanning 19–85 is the HMA domain; that stretch reads KHIDLAVEGV…RLEELGYKAY (67 aa). Positions 30 and 33 each coordinate a metal cation. A helical membrane pass occupies residues 102–123; it reads FLLRCLGVAAFATMNVMMLSIP. Over 124–138 the chain is Extracellular; sequence VWSGNVSDMLPEQRD. A helical transmembrane segment spans residues 139–162; sequence FFHWLSALIALPAAAYAGQPFFRS. The Cytoplasmic segment spans residues 163–168; sequence AWRALS. The helical transmembrane segment at 169–190 threads the bilayer; sequence AKTTNMDVPISIGVILALGMSV. The Extracellular portion of the chain corresponds to 191–202; sequence VETIHHAEHAYF. A helical transmembrane segment spans residues 203–223; that stretch reads DAAIMLLTFLLVGRFLDQNMR. Topologically, residues 224–352 are cytoplasmic; sequence RRTRAVAGNL…RSRYMRLADR (129 aa). A helical membrane pass occupies residues 353–375; that stretch reads ASRLYAPVVHATALITILGWVIA. Residues 376-382 lie on the Extracellular side of the membrane; sequence GASWHDA. A helical transmembrane segment spans residues 383–400; that stretch reads IVTGVAVLIITCPCALGL. The Cytoplasmic portion of the chain corresponds to 401-676; it reads AIPTVQTVAS…DSARKALHLM (276 aa). Asp-438 acts as the 4-aspartylphosphate intermediate in catalysis. The Mg(2+) site is built by Asp-622 and Asp-626. Residues 677 to 696 traverse the membrane as a helical segment; it reads RQNLWLAIGYNVLAVPVAIS. Residues 697 to 701 are Extracellular-facing; that stretch reads GVVTP. Residues 702 to 720 form a helical membrane-spanning segment; it reads LIAAAAMSGSSILVMLNSL. The Cytoplasmic portion of the chain corresponds to 721-730; sequence RARSDSREIV.

The protein belongs to the cation transport ATPase (P-type) (TC 3.A.3) family. Type IB subfamily.

Its subcellular location is the cell membrane. The enzyme catalyses ATP + H2O = ADP + phosphate + H(+). Its function is as follows. FixI is a pump of a specific cation involved in symbiotic nitrogen fixation. The four proteins FixG, FixH, FixI, and FixS may participate in a membrane-bound complex coupling the FixI cation pump with a redox process catalyzed by FixG. The polypeptide is Nitrogen fixation protein FixI (fixI) (Bradyrhizobium diazoefficiens (strain JCM 10833 / BCRC 13528 / IAM 13628 / NBRC 14792 / USDA 110)).